Consider the following 478-residue polypeptide: Glutamate--tRNA ligase (478 aa).

A 'HIGH' region motif is present at residues 9–19; it reads PSPTGLLHIGT. Positions 248 to 252 match the 'KMSKS' region motif; the sequence is KLSKR. ATP is bound at residue K251.

This sequence belongs to the class-I aminoacyl-tRNA synthetase family. Glutamate--tRNA ligase type 1 subfamily. As to quaternary structure, monomer.

The protein resides in the cytoplasm. It catalyses the reaction tRNA(Glu) + L-glutamate + ATP = L-glutamyl-tRNA(Glu) + AMP + diphosphate. Its function is as follows. Catalyzes the attachment of glutamate to tRNA(Glu) in a two-step reaction: glutamate is first activated by ATP to form Glu-AMP and then transferred to the acceptor end of tRNA(Glu). In Prochlorococcus marinus subsp. pastoris (strain CCMP1986 / NIES-2087 / MED4), this protein is Glutamate--tRNA ligase.